The sequence spans 509 residues: Maturase K (509 aa).

This sequence belongs to the intron maturase 2 family. MatK subfamily.

The protein localises to the plastid. It is found in the chloroplast. Usually encoded in the trnK tRNA gene intron. Probably assists in splicing its own and other chloroplast group II introns. In Thujopsis dolabrata (Hiba arborvitae), this protein is Maturase K.